Consider the following 314-residue polypeptide: PDZ domain-containing protein GIPC2 (314 aa).

Residues methionine 1–alanine 12 show a composition bias toward basic residues. Residues methionine 1–proline 36 are disordered. The segment covering lysine 13–arginine 25 has biased composition (basic and acidic residues). The PDZ domain occupies glutamate 117–glutamate 197.

Belongs to the GIPC family. Probably interacts with SEMA5A.

The protein localises to the cytoplasm. This is PDZ domain-containing protein GIPC2 (Gipc2) from Rattus norvegicus (Rat).